A 40-amino-acid polypeptide reads, in one-letter code: Dermonecrotic toxin LgSicTox-alphaI-1 (40 aa).

Mg(2+)-binding residues include Glu32 and Asp34.

The protein belongs to the arthropod phospholipase D family. Class II subfamily. Mg(2+) serves as cofactor. In terms of processing, contains 2 disulfide bonds. In terms of tissue distribution, expressed by the venom gland.

The protein localises to the secreted. It catalyses the reaction an N-(acyl)-sphingosylphosphocholine = an N-(acyl)-sphingosyl-1,3-cyclic phosphate + choline. The enzyme catalyses an N-(acyl)-sphingosylphosphoethanolamine = an N-(acyl)-sphingosyl-1,3-cyclic phosphate + ethanolamine. It carries out the reaction a 1-acyl-sn-glycero-3-phosphocholine = a 1-acyl-sn-glycero-2,3-cyclic phosphate + choline. The catalysed reaction is a 1-acyl-sn-glycero-3-phosphoethanolamine = a 1-acyl-sn-glycero-2,3-cyclic phosphate + ethanolamine. Functionally, dermonecrotic toxins cleave the phosphodiester linkage between the phosphate and headgroup of certain phospholipids (sphingolipid and lysolipid substrates), forming an alcohol (often choline) and a cyclic phosphate. This toxin acts on sphingomyelin (SM). It may also act on ceramide phosphoethanolamine (CPE), lysophosphatidylcholine (LPC) and lysophosphatidylethanolamine (LPE), but not on lysophosphatidylserine (LPS), and lysophosphatidylglycerol (LPG). It acts by transphosphatidylation, releasing exclusively cyclic phosphate products as second products. In vivo, intradermal injection induces dermonecrosis. Induces, hemolysis, vascular permeability, edema, inflammatory response, and platelet aggregation. The polypeptide is Dermonecrotic toxin LgSicTox-alphaI-1 (Loxosceles gaucho (Spider)).